Here is a 959-residue protein sequence, read N- to C-terminus: Kinesin-like protein NACK1 (959 aa).

The disordered stretch occupies residues 1–28 (MTVRTPGTPASKIDKTPATTPNGHRGRE). Positions 30–353 (KIVVTVRLRP…LYFATRAKEV (324 aa)) constitute a Kinesin motor domain. Position 117–124 (117–124 (GQTSSGKT)) interacts with ATP. Thr145 carries the post-translational modification Phosphothreonine. The stretch at 362-429 (VVSDKQLVKH…LRRKLQEEQG (68 aa)) forms a coiled coil. 4 disordered regions span residues 417–438 (VDELRRKLQEEQGPKPSESVSP), 451–473 (SPNLEEKAPVRSERTRNTMGRQS), 598–640 (LPSN…FLKS), and 658–700 (NRAP…SVNM). Basic and acidic residues-rich tracts occupy residues 418–429 (DELRRKLQEEQG) and 454–466 (LEEKAPVRSERTR). A coiled-coil region spans residues 557–598 (KSVSANLKEEIARLHSQGSTIADLEEQLENVQKSLDKLVMSL). Over residues 600 to 611 (SNNDQQSNNDTT) the composition is skewed to low complexity. Basic residues predominate over residues 613–623 (KAKHPSKKKKL). Positions 630–640 (NSINRQNFLKS) are enriched in polar residues. Phosphothreonine is present on residues Thr675 and Thr690. The segment at 685–756 (SSKEGTPYRR…EANEAAGYNL (72 aa)) is required for the binding to NPK1.

This sequence belongs to the TRAFAC class myosin-kinesin ATPase superfamily. Kinesin family. KIN-7 subfamily. Interacts (via C-terminus) with NPK1 (via C-terminus). Phosphorylated at Thr-145, Thr-675 and Thr-690 by CDKAs and CDKBs. The phosphorylation occurs before metaphase and inhibits the interaction with NPK1 preventing the transition to cytokinesis.

Its subcellular location is the cytoplasm. It is found in the nucleus. The protein localises to the cytoskeleton. The protein resides in the phragmoplast. Its function is as follows. Probable plus end-directed motor protein that functions in the NACK-PQR (NPK1-NQK1/MEK1-NRK1) MAP kinase signaling pathway, which is essential for somatic cell cytokinesis, especially for the cell-plate formation and its expansion. Regulates the activity and the localization of NPK1 by association through the non-catalytic region of the kinase. This Nicotiana tabacum (Common tobacco) protein is Kinesin-like protein NACK1 (NACK1).